Consider the following 177-residue polypeptide: Ribosome rescue factor SmrB (177 aa).

Residues serine 22–arginine 45 are disordered. Polar residues predominate over residues isoleucine 30–glutamine 41. Residues leucine 98–serine 173 enclose the Smr domain.

This sequence belongs to the SmrB family. Associates with collided ribosomes, but not with correctly translating polysomes.

Functionally, acts as a ribosome collision sensor. Detects stalled/collided disomes (pairs of ribosomes where the leading ribosome is stalled and a second ribosome has collided with it) and endonucleolytically cleaves mRNA at the 5' boundary of the stalled ribosome. Stalled/collided disomes form a new interface (primarily via the 30S subunits) that binds SmrB. Cleaved mRNA becomes available for tmRNA ligation, leading to ribosomal subunit dissociation and rescue of stalled ribosomes. This Aliivibrio salmonicida (strain LFI1238) (Vibrio salmonicida (strain LFI1238)) protein is Ribosome rescue factor SmrB.